Consider the following 107-residue polypeptide: Metallothionein-1 (107 aa).

The propeptide occupies 1-2 (MD).

Belongs to the metallothionein superfamily. Type 7 family.

The metallothioneins are involved in the cellular sequestration of toxic metal ions. Binds 12 cadmium ions per molecule. In Tetrahymena pyriformis, this protein is Metallothionein-1.